Here is a 393-residue protein sequence, read N- to C-terminus: Formate-dependent phosphoribosylglycinamide formyltransferase (393 aa).

Residues 22–23 and glutamate 82 contribute to the N(1)-(5-phospho-beta-D-ribosyl)glycinamide site; that span reads EL. ATP-binding positions include arginine 114, lysine 155, 160 to 165, 195 to 198, and glutamate 203; these read SSGKGQ and EGFI. One can recognise an ATP-grasp domain in the interval 119-308; it reads RLAAEELDLP…QFALHARAIL (190 aa). Mg(2+) is bound by residues glutamate 267 and glutamate 279. N(1)-(5-phospho-beta-D-ribosyl)glycinamide contacts are provided by residues aspartate 286, lysine 356, and 363 to 364; that span reads RR.

This sequence belongs to the PurK/PurT family. As to quaternary structure, homodimer.

The enzyme catalyses N(1)-(5-phospho-beta-D-ribosyl)glycinamide + formate + ATP = N(2)-formyl-N(1)-(5-phospho-beta-D-ribosyl)glycinamide + ADP + phosphate + H(+). Its pathway is purine metabolism; IMP biosynthesis via de novo pathway; N(2)-formyl-N(1)-(5-phospho-D-ribosyl)glycinamide from N(1)-(5-phospho-D-ribosyl)glycinamide (formate route): step 1/1. In terms of biological role, involved in the de novo purine biosynthesis. Catalyzes the transfer of formate to 5-phospho-ribosyl-glycinamide (GAR), producing 5-phospho-ribosyl-N-formylglycinamide (FGAR). Formate is provided by PurU via hydrolysis of 10-formyl-tetrahydrofolate. The sequence is that of Formate-dependent phosphoribosylglycinamide formyltransferase from Pseudomonas entomophila (strain L48).